The sequence spans 146 residues: Catabolic 3-dehydroquinase (146 aa).

Tyr24 acts as the Proton acceptor in catalysis. 3 residues coordinate substrate: Asn78, His84, and Asp91. His104 (proton donor) is an active-site residue. Substrate contacts are provided by residues 105-106 (IT) and Arg115.

Belongs to the type-II 3-dehydroquinase family. In terms of assembly, homododecamer. Adopts a ring-like structure, composed of an arrangement of two hexameric rings stacked on top of one another.

The enzyme catalyses 3-dehydroquinate = 3-dehydroshikimate + H2O. Its pathway is aromatic compound metabolism; 3,4-dihydroxybenzoate biosynthesis; 3,4-dihydroxybenzoate from 3-dehydroquinate: step 1/2. Its function is as follows. Is involved in the catabolism of quinate. Allows the utilization of quinate as carbon source via the beta-ketoadipate pathway. The protein is Catabolic 3-dehydroquinase of Scheffersomyces stipitis (strain ATCC 58785 / CBS 6054 / NBRC 10063 / NRRL Y-11545) (Yeast).